The following is a 168-amino-acid chain: Transcriptional repressor NrdR (168 aa).

The segment at 3-34 (CPYCGFAQDRVVDSRESKEADSIRRRRECERC) is a zinc-finger region. The 91-residue stretch at 49–139 (YMVVKKDGRR…VYRDFKDVNE (91 aa)) folds into the ATP-cone domain.

The protein belongs to the NrdR family. Requires Zn(2+) as cofactor.

In terms of biological role, negatively regulates transcription of bacterial ribonucleotide reductase nrd genes and operons by binding to NrdR-boxes. The chain is Transcriptional repressor NrdR from Acidobacterium capsulatum (strain ATCC 51196 / DSM 11244 / BCRC 80197 / JCM 7670 / NBRC 15755 / NCIMB 13165 / 161).